We begin with the raw amino-acid sequence, 207 residues long: D-aminoacyl-tRNA deacylase 1 (207 aa).

The short motif at 139 to 140 (GP) is the Gly-cisPro motif, important for rejection of L-amino acids element. The tract at residues 142-207 (TIQLESPPAP…EGDVSSEREP (66 aa)) is disordered. Basic and acidic residues-rich tracts occupy residues 156 to 167 (LLSKQEKQQQRK) and 178 to 189 (SSREKAAQRSKV).

It belongs to the DTD family. Homodimer.

It is found in the cytoplasm. It carries out the reaction a D-aminoacyl-tRNA + H2O = a tRNA + a D-alpha-amino acid + H(+). It catalyses the reaction glycyl-tRNA(Ala) + H2O = tRNA(Ala) + glycine + H(+). In terms of biological role, D-aminoacyl-tRNA deacylase, with no observable activity on tRNAs charged with their cognate L-amino acid. Hydrolyzes correctly charged, achiral, glycyl-tRNA(Gly). Deacylates mischarged D.melanogaster and E.coli glycyl-tRNA(Ala), protecting cells against glycine mischarging by AlaRS. Acts via tRNA-based rather than protein-based catalysis; rejects L-amino acids rather than detecting D-amino acids in the active site. By recycling D-aminoacyl-tRNA to D-amino acids and free tRNA molecules, this enzyme counteracts the toxicity associated with the formation of D-aminoacyl-tRNA entities in vivo and helps enforce protein L-homochirality. This Danio rerio (Zebrafish) protein is D-aminoacyl-tRNA deacylase 1.